A 102-amino-acid polypeptide reads, in one-letter code: Thioredoxin (102 aa).

The Thioredoxin domain maps to 1–102 (MVKVVSAENF…SLIRLINQHS (102 aa)). A disulfide bond links Cys28 and Cys31.

It belongs to the thioredoxin family.

In terms of biological role, participates in various redox reactions through the reversible oxidation of its active center dithiol to a disulfide and catalyzes dithiol-disulfide exchange reactions. The sequence is that of Thioredoxin (trxA) from Chlamydia caviae (strain ATCC VR-813 / DSM 19441 / 03DC25 / GPIC) (Chlamydophila caviae).